A 233-amino-acid chain; its full sequence is Archaetidylserine synthase (233 aa).

8 helical membrane passes run 7–27 (ITSF…SGYL), 29–49 (ILLS…LAVL), 75–95 (SLSD…SAAV), 102–122 (ILVG…FNVL), 126–146 (GKNF…SFYL), 147–167 (TGFY…VLMI), 180–200 (ASTA…VEIL), and 206–226 (VAGP…AVPI).

Belongs to the CDP-alcohol phosphatidyltransferase class-I family.

It is found in the membrane. It catalyses the reaction CDP-2,3-bis-O-(geranylgeranyl)-sn-glycerol + L-serine = archaetidylserine + CMP + H(+). The catalysed reaction is CDP-2,3-bis-O-(phytanyl)-sn-glycerol + L-serine = 2,3-bis-O-phytanyl-sn-glycero-3-phospho-L-serine + CMP + H(+). It functions in the pathway membrane lipid metabolism; glycerophospholipid metabolism. With respect to regulation, activated by Mn(2+) ions. Involved in the lipid biosynthesis. Catalyzes the formation of unsaturated archaetidylserine from CDP-unsaturated archaeol and L-serine. Activity with ester-linked substrate analogs containing straight aliphatic chains (typical bacterial substrates) is two to three times higher than that with the corresponding ether-type substrate (typical archaeal substrates). Both enantiomers of CDP-unsaturated archaeols with ether-linked geranylgeranyl chains and CDP-saturated archaeol with ether-linked phytanyl chains are similarly active. The enzyme also accepts D-serine, although activity is only about third of that with L-serine. The sequence is that of Archaetidylserine synthase from Methanothermobacter thermautotrophicus (strain ATCC 29096 / DSM 1053 / JCM 10044 / NBRC 100330 / Delta H) (Methanobacterium thermoautotrophicum).